Reading from the N-terminus, the 168-residue chain is Protein DESIGUAL 2 (168 aa).

Residues 1-20 (MARNVGFFICILILAMDVSA) form the signal peptide. The next 3 helical transmembrane spans lie at 56 to 76 (LAAC…GGCL), 94 to 114 (AVAS…MLIV), and 133 to 153 (VLSI…AYYI).

It belongs to the DESIGUAL family. In terms of tissue distribution, mainly expressed in roots, inflorescences and developing leaves, and, at low levels, in mature leaves.

The protein resides in the endoplasmic reticulum membrane. In terms of biological role, involved, partially redundantly with VCC/DEAL1 and DEAL3, to ensure bilateral symmetry development and early leaf margin patterning, probably via the regulation of auxin and CUC2 distribution. This is Protein DESIGUAL 2 from Arabidopsis thaliana (Mouse-ear cress).